Consider the following 379-residue polypeptide: Homoserine O-succinyltransferase (379 aa).

The AB hydrolase-1 domain maps to 51–360 (NAVLICHALS…DSPYGHDAFL (310 aa)). The active-site Nucleophile is the serine 157. Residue arginine 227 participates in substrate binding. Active-site residues include aspartate 323 and histidine 356. Residue aspartate 357 participates in substrate binding.

Belongs to the AB hydrolase superfamily. MetX family. Homodimer.

The protein localises to the cytoplasm. It carries out the reaction L-homoserine + succinyl-CoA = O-succinyl-L-homoserine + CoA. It participates in amino-acid biosynthesis; L-methionine biosynthesis via de novo pathway; O-succinyl-L-homoserine from L-homoserine: step 1/1. Transfers a succinyl group from succinyl-CoA to L-homoserine, forming succinyl-L-homoserine. The protein is Homoserine O-succinyltransferase of Pseudomonas entomophila (strain L48).